The chain runs to 285 residues: Meiotically up-regulated gene 125 protein (285 aa).

The protein resides in the cytoplasm. It localises to the nucleus. Has a role in meiosis. The polypeptide is Meiotically up-regulated gene 125 protein (mug125) (Schizosaccharomyces pombe (strain 972 / ATCC 24843) (Fission yeast)).